Reading from the N-terminus, the 510-residue chain is Probable ADP-ribosylation factor-binding protein C1F3.05 (510 aa).

Positions 14-150 constitute a VHS domain; it reads ATDQFNLEPN…LMAFRGYKFP (137 aa). The region spanning 177–301 is the GAT domain; it reads LEAHKAKLQE…VIEECSNSDL (125 aa). Residues 391-510 enclose the GAE domain; it reads TNSSLTSILQ…VEQGESHLPL (120 aa).

It is found in the golgi apparatus. The protein localises to the trans-Golgi network. May play a role in the regulation of membrane traffic through the trans-Golgi network. In Schizosaccharomyces pombe (strain 972 / ATCC 24843) (Fission yeast), this protein is Probable ADP-ribosylation factor-binding protein C1F3.05.